Reading from the N-terminus, the 324-residue chain is Glyoxylate/hydroxypyruvate reductase B (324 aa).

Residues Arg237 and Glu266 contribute to the active site. Residue His285 is the Proton donor of the active site.

The protein belongs to the D-isomer specific 2-hydroxyacid dehydrogenase family. GhrB subfamily. As to quaternary structure, homodimer.

The protein localises to the cytoplasm. It catalyses the reaction glycolate + NADP(+) = glyoxylate + NADPH + H(+). It carries out the reaction (R)-glycerate + NAD(+) = 3-hydroxypyruvate + NADH + H(+). The enzyme catalyses (R)-glycerate + NADP(+) = 3-hydroxypyruvate + NADPH + H(+). Its function is as follows. Catalyzes the NADPH-dependent reduction of glyoxylate and hydroxypyruvate into glycolate and glycerate, respectively. The sequence is that of Glyoxylate/hydroxypyruvate reductase B from Salmonella typhi.